Consider the following 187-residue polypeptide: Ponticulin-like protein K (187 aa).

A signal peptide spans 1-19 (MKNLILLFLLISIINLIQS). N-linked (GlcNAc...) asparagine glycosylation is found at N31, N70, N86, N93, N119, N128, N146, N160, and N161. Residues 115–146 (PSPSNSSNPSPSPNTTSSSSLSSSSLNSNEPN) show a composition bias toward low complexity. The tract at residues 115–161 (PSPSNSSNPSPSPNTTSSSSLSSSSLNSNEPNQTTKPPKTNEPQKNN) is disordered. Polar residues predominate over residues 147–161 (QTTKPPKTNEPQKNN). N161 carries GPI-like-anchor amidated asparagine lipidation. A propeptide spans 162–187 (STSNIPNFFAIFGFLVLIIFILGDKI) (removed in mature form).

Belongs to the ponticulin family. In terms of processing, the GPI-like-anchor contains a phosphoceramide group, rather than a phosphatidyl group.

Its subcellular location is the cell membrane. In terms of biological role, binds F-actin and nucleates actin assembly. The chain is Ponticulin-like protein K (ponK) from Dictyostelium discoideum (Social amoeba).